A 263-amino-acid chain; its full sequence is Glutamate/glutamine/aspartate/asparagine transport ATP-binding protein BztD (263 aa).

The 235-residue stretch at 23 to 257 (IQISQMNKWY…PQSERTKQFL (235 aa)) folds into the ABC transporter domain. 55-62 (GPSGSGKS) provides a ligand contact to ATP.

The protein belongs to the ABC transporter superfamily. As to quaternary structure, bztB and BztC form a heterodimer which can form a membrane complex with a homodimer of BztD.

It is found in the cell membrane. Its function is as follows. Part of a binding-protein-dependent transport system for glutamate, glutamine, aspartate, asparagine. Probably responsible for energy coupling to the transport system. In Rhodobacter capsulatus (strain ATCC BAA-309 / NBRC 16581 / SB1003), this protein is Glutamate/glutamine/aspartate/asparagine transport ATP-binding protein BztD (bztD).